The primary structure comprises 1004 residues: Liprin-beta homolog (1004 aa).

Composition is skewed to low complexity over residues 50 to 63 (NGNSTSRSTTTIGS) and 149 to 161 (SPPSDLPTSSSSL). Disordered stretches follow at residues 50 to 122 (NGNS…RSSR) and 135 to 161 (HRTDLGSDGSSGVESPPSDLPTSSSSL). 2 coiled-coil regions span residues 280–328 (CQEL…VNQS) and 364–396 (DEMSQLRTAVQRLMADNEHKSLQINTLRNALDE). Disordered regions lie at residues 341–366 (HTNGHSSGGYMSPLREHRSEKNDDEM), 432–497 (PSDS…GGNQ), 528–550 (NGNEGANHNYSSASLPRGVGKAS), and 648–686 (FSKLTRSTSQDQSNSFRRGSAARSTSTARLGSTNHLGTV). Residues 434–453 (DSMSHSTSFPVSLSSTTSNG) show a composition bias toward polar residues. The span at 458 to 474 (STVQSSSSYNSSLSAVS) shows a compositional bias: low complexity. Composition is skewed to polar residues over residues 531-541 (EGANHNYSSAS) and 648-684 (FSKLTRSTSQDQSNSFRRGSAARSTSTARLGSTNHLG). SAM domains lie at 698–762 (WRSE…IEED), 770–833 (WDVH…LKKA), and 858–930 (VVRW…LLGP).

Belongs to the liprin family. Liprin-beta subfamily. Expressed in pharyngeal muscle, particularly posterior bulb, adjacent to the dorsal and ventral cord (but not in ventral cord neurons), and in body wall muscles.

Involved in the regulation of synaptic function at neuromuscular junctions. Together with the liprin-alpha protein syd-2, may play a role in regulating the structure of the neuronal region, called the active zone, from which synaptic vesicles send neurotransmitter signals across the synapse. Does not seem to be required for neuronal development. May regulate the disassembly of focal adhesions. Does not bind receptor-like tyrosine phosphatases type 2A. The polypeptide is Liprin-beta homolog (Caenorhabditis elegans).